The sequence spans 159 residues: Ribosomal RNA large subunit methyltransferase H (159 aa).

S-adenosyl-L-methionine is bound by residues Leu76, Gly108, and 127-132 (FGLLTL).

Belongs to the RNA methyltransferase RlmH family. Homodimer.

The protein localises to the cytoplasm. It catalyses the reaction pseudouridine(1915) in 23S rRNA + S-adenosyl-L-methionine = N(3)-methylpseudouridine(1915) in 23S rRNA + S-adenosyl-L-homocysteine + H(+). In terms of biological role, specifically methylates the pseudouridine at position 1915 (m3Psi1915) in 23S rRNA. The protein is Ribosomal RNA large subunit methyltransferase H of Streptococcus pyogenes serotype M6 (strain ATCC BAA-946 / MGAS10394).